The primary structure comprises 159 residues: MPNKEEKIYLTADSFKQYQERLQYLQEVLRPQVIEEIKEARNQGDLSENAEYDAARDKQATIENEITEIQHILDNYEIIKTQTNRQVSVVRIGSNVSVVSLKDDTVINFQIVGALDTDPFNGKISNTSPLAKAVIGRKAGEVVEVEAPNKYQVKIVHVG.

A coiled-coil region spans residues 47–77 (SENAEYDAARDKQATIENEITEIQHILDNYE).

It belongs to the GreA/GreB family.

Necessary for efficient RNA polymerase transcription elongation past template-encoded arresting sites. The arresting sites in DNA have the property of trapping a certain fraction of elongating RNA polymerases that pass through, resulting in locked ternary complexes. Cleavage of the nascent transcript by cleavage factors such as GreA or GreB allows the resumption of elongation from the new 3'terminus. GreA releases sequences of 2 to 3 nucleotides. The protein is Transcription elongation factor GreA of Metamycoplasma arthritidis (strain 158L3-1) (Mycoplasma arthritidis).